We begin with the raw amino-acid sequence, 1455 residues long: Fanconi anemia group A protein (1455 aa).

A Nuclear localization signal motif is present at residues 18 to 34; it reads RRRAWAELLAGRVKREK. A Phosphoserine modification is found at Ser1449.

In terms of assembly, belongs to the multisubunit FA complex composed of FANCA, FANCB, FANCC, FANCE, FANCF, FANCG, FANCL/PHF9 and FANCM. The complex is not found in FA patients. In complex with FANCF, FANCG and FANCL, but not with FANCC, nor FANCE, interacts with HES1; this interaction may be essential for the stability and nuclear localization of FA core complex proteins. The complex with FANCC and FANCG may also include EIF2AK2 and HSP70. Interacts with FAAP20/C1orf86; interaction is direct. Phosphorylation is required for the formation of the nuclear complex. Not phosphorylated in cells derived from groups A, B, C, E, F, G, and H.

It is found in the nucleus. Its subcellular location is the cytoplasm. Its function is as follows. DNA repair protein that may operate in a postreplication repair or a cell cycle checkpoint function. May be involved in interstrand DNA cross-link repair and in the maintenance of normal chromosome stability. This Homo sapiens (Human) protein is Fanconi anemia group A protein (FANCA).